A 1164-amino-acid polypeptide reads, in one-letter code: Toxin subunit YenA1 (1164 aa).

Residues 106-131 form a disordered region; it reads RLEKSNSPLVPQTSSSTDASSESQTN. Positions 118–130 are enriched in low complexity; the sequence is TSSSTDASSESQT.

Semipurified toxin complex consists of at least YenA1, YenA2, YenB, YenC1, YenC2, Chi1 and Chi2. The Yen-TC:K9 subcomplex is about 26 nm tall and 22 nm in diameter with 5-fold symmetry and 5 copies of YenA1, YenA2, Chi1 and Chi2; the chitinase subunits may be solvent accessible on the exterior the complex. The Yen-TC:K9 subcomplex has no insecticidal activity. The native complex with additional YenB, YenC1 and YenC2 subunits is 16 nm taller and is insecticidal; the toxicity-conferring subunits are present at about 1 copy each.

It is found in the secreted. With respect to regulation, toxin complex is secreted when grown at 25 degrees Celsius or less; at higher temperatures the proteins are present intracellularly but not secreted. In terms of biological role, part of an orally active toxin complex (TC) with strong insecticidal effects on larvae of the Coleoptera Costelytra zealandica, Acrossidius tasmania and Adoryphorus couloni and some Lepidoptera larvae. The TC has an endochitinase activity. This chain is Toxin subunit YenA1, found in Yersinia entomophaga.